The sequence spans 115 residues: MRKMMPMNPKQLKKLMKQLDMRQLEGVKEVIIKMEDREIIIKEPIVTVIKAMGEKMYQIAGGSEEEKAIINISEEDIKLVMEQAGVDYETAKKALEETGGDLAEAILRLTDSGVE.

An NAC-A/B domain is found at 6–72; that stretch reads PMNPKQLKKL…SEEEKAIINI (67 aa).

The protein belongs to the NAC-alpha family. In terms of assembly, homodimer. Interacts with the ribosome. Binds ribosomal RNA.

Contacts the emerging nascent chain on the ribosome. This is Nascent polypeptide-associated complex protein from Pyrococcus horikoshii (strain ATCC 700860 / DSM 12428 / JCM 9974 / NBRC 100139 / OT-3).